A 189-amino-acid polypeptide reads, in one-letter code: Cytidylate kinase (189 aa).

Position 7–15 (7–15 (GPPGSGKTS)) interacts with ATP.

It belongs to the cytidylate kinase family. Type 2 subfamily.

The protein localises to the cytoplasm. It carries out the reaction CMP + ATP = CDP + ADP. The enzyme catalyses dCMP + ATP = dCDP + ADP. This is Cytidylate kinase from Saccharolobus islandicus (strain L.S.2.15 / Lassen #1) (Sulfolobus islandicus).